The primary structure comprises 436 residues: Ribulose bisphosphate carboxylase large chain (436 aa).

Residue K4 is modified to N6,N6,N6-trimethyllysine. 2 residues coordinate substrate: N113 and T163. The Proton acceptor role is filled by K165. Position 167 (K167) interacts with substrate. Mg(2+) contacts are provided by K191, D193, and E194. An N6-carboxylysine modification is found at K191. The active-site Proton acceptor is H284. R285, H317, and S369 together coordinate substrate.

This sequence belongs to the RuBisCO large chain family. Type I subfamily. As to quaternary structure, heterohexadecamer of 8 large chains and 8 small chains; disulfide-linked. The disulfide link is formed within the large subunit homodimers. Mg(2+) serves as cofactor. Post-translationally, the disulfide bond which can form in the large chain dimeric partners within the hexadecamer appears to be associated with oxidative stress and protein turnover.

The protein resides in the plastid. The protein localises to the chloroplast. The enzyme catalyses 2 (2R)-3-phosphoglycerate + 2 H(+) = D-ribulose 1,5-bisphosphate + CO2 + H2O. It catalyses the reaction D-ribulose 1,5-bisphosphate + O2 = 2-phosphoglycolate + (2R)-3-phosphoglycerate + 2 H(+). Its function is as follows. RuBisCO catalyzes two reactions: the carboxylation of D-ribulose 1,5-bisphosphate, the primary event in carbon dioxide fixation, as well as the oxidative fragmentation of the pentose substrate in the photorespiration process. Both reactions occur simultaneously and in competition at the same active site. The protein is Ribulose bisphosphate carboxylase large chain of Sanguinaria canadensis (Bloodroot).